A 387-amino-acid polypeptide reads, in one-letter code: Mannitol-1-phosphate 5-dehydrogenase (387 aa).

3-14 (ALHFGAGNIGRG) lines the NAD(+) pocket.

Belongs to the mannitol dehydrogenase family.

It catalyses the reaction D-mannitol 1-phosphate + NAD(+) = beta-D-fructose 6-phosphate + NADH + H(+). The polypeptide is Mannitol-1-phosphate 5-dehydrogenase (Yersinia pestis bv. Antiqua (strain Antiqua)).